A 482-amino-acid polypeptide reads, in one-letter code: Glycogen synthase (482 aa).

Lys18 serves as a coordination point for ADP-alpha-D-glucose.

The protein belongs to the glycosyltransferase 1 family. Bacterial/plant glycogen synthase subfamily.

The enzyme catalyses [(1-&gt;4)-alpha-D-glucosyl](n) + ADP-alpha-D-glucose = [(1-&gt;4)-alpha-D-glucosyl](n+1) + ADP + H(+). It participates in glycan biosynthesis; glycogen biosynthesis. Its function is as follows. Synthesizes alpha-1,4-glucan chains using ADP-glucose. This chain is Glycogen synthase, found in Rhodopseudomonas palustris (strain HaA2).